The primary structure comprises 60 residues: MAVQQNKKSPSKRGMHRSHDFLVNPPTAIEPTTGESHLRHHISPNGFYRGRKILKTKADE.

The interval 1–60 is disordered; that stretch reads MAVQQNKKSPSKRGMHRSHDFLVNPPTAIEPTTGESHLRHHISPNGFYRGRKILKTKADE. The segment covering 49 to 60 has biased composition (basic residues); the sequence is RGRKILKTKADE.

It belongs to the bacterial ribosomal protein bL32 family.

This is Large ribosomal subunit protein bL32 from Bordetella avium (strain 197N).